The chain runs to 1231 residues: Pesticidal crystal protein Cry1Bd (1231 aa).

The protein belongs to the delta endotoxin family.

In terms of biological role, promotes colloidosmotic lysis by binding to the midgut epithelial cells of lepidopteran larvae. Toxic to Plutella xylostella. This is Pesticidal crystal protein Cry1Bd (cry1Bd) from Bacillus thuringiensis subsp. wuhanensis.